A 1408-amino-acid polypeptide reads, in one-letter code: ABC multidrug transporter MDR1 (1408 aa).

Residues 79-88 (IAASSDTLRN) show a composition bias toward polar residues. A disordered region spans residues 79–102 (IAASSDTLRNSPLEKPISNAFSKS). The next 2 membrane-spanning stretches (helical) occupy residues 147-167 (FAAP…VAAG) and 223-243 (LYLM…MFIW). Residues 157–464 (VLGLVLAVAA…LAPELAAVTK (308 aa)) form the ABC transmembrane type-1 1 domain. A glycan (N-linked (GlcNAc...) asparagine) is linked at N244. 4 helical membrane-spanning segments follow: residues 296–316 (KVAL…LAFV), 321–341 (LAGA…IMMT), 408–428 (IMFF…GILV), and 436–456 (GIVI…AMLA). One can recognise an ABC transporter 1 domain in the interval 499 to 744 (ISFENVKFHY…ENGPYAQLVN (246 aa)). 534–541 (GASGSGKS) contacts ATP. N606 carries an N-linked (GlcNAc...) asparagine glycan. A run of 2 helical transmembrane segments spans residues 838–858 (IIAF…AILF) and 882–902 (LWYF…SAGF). Residues 838-1125 (IIAFIAAICA…VFTFVPDASK (288 aa)) form the ABC transmembrane type-1 2 domain. N934 is a glycosylation site (N-linked (GlcNAc...) asparagine). Helical transmembrane passes span 952-972 (GLFG…IGGC), 981-999 (LLAL…GGYI), 1072-1092 (GLTF…IIDA), and 1099-1119 (FYTV…VFTF). 2 N-linked (GlcNAc...) asparagine glycosylation sites follow: N1127 and N1182. Residues 1162-1402 (VRIEGVHFRY…KGGYYELVQM (241 aa)) form the ABC transporter 2 domain. 1197–1204 (GPSGCGKS) lines the ATP pocket. N1404 carries N-linked (GlcNAc...) asparagine glycosylation.

It belongs to the ABC transporter superfamily. ABCB family. Multidrug resistance exporter (TC 3.A.1.201) subfamily.

It is found in the cell membrane. It carries out the reaction itraconazole(in) + ATP + H2O = itraconazole(out) + ADP + phosphate + H(+). The catalysed reaction is voriconazole(in) + ATP + H2O = voriconazole(out) + ADP + phosphate + H(+). The enzyme catalyses fluconazole(in) + ATP + H2O = fluconazole(out) + ADP + phosphate + H(+). In terms of biological role, pleiotropic ABC efflux transporter that confers resistance to structurally and functionally unrelated compounds including azoles such as fluconazole (FLC), itraconazole (ITC), posaconazole (POS), and voriconazole (VRC). This Cryptococcus neoformans var. grubii serotype A (strain H99 / ATCC 208821 / CBS 10515 / FGSC 9487) (Filobasidiella neoformans var. grubii) protein is ABC multidrug transporter MDR1.